The following is a 293-amino-acid chain: Bifunctional protein FolD (293 aa).

NADP(+)-binding positions include 164–166 (GRS), serine 193, and threonine 234.

The protein belongs to the tetrahydrofolate dehydrogenase/cyclohydrolase family. As to quaternary structure, homodimer.

The catalysed reaction is (6R)-5,10-methylene-5,6,7,8-tetrahydrofolate + NADP(+) = (6R)-5,10-methenyltetrahydrofolate + NADPH. The enzyme catalyses (6R)-5,10-methenyltetrahydrofolate + H2O = (6R)-10-formyltetrahydrofolate + H(+). Its pathway is one-carbon metabolism; tetrahydrofolate interconversion. Its function is as follows. Catalyzes the oxidation of 5,10-methylenetetrahydrofolate to 5,10-methenyltetrahydrofolate and then the hydrolysis of 5,10-methenyltetrahydrofolate to 10-formyltetrahydrofolate. This Bacteroides thetaiotaomicron (strain ATCC 29148 / DSM 2079 / JCM 5827 / CCUG 10774 / NCTC 10582 / VPI-5482 / E50) protein is Bifunctional protein FolD.